A 419-amino-acid polypeptide reads, in one-letter code: Carboxypeptidase A1 (419 aa).

The signal sequence occupies residues 1-16; that stretch reads MQGLLILSVLLGAALG. Residues 17–110 constitute a propeptide, activation peptide; that stretch reads KEDFVGHQVL…QEQMFASQSR (94 aa). Residues 121-414 form the Peptidase M14 domain; sequence TYHTLDEIYD…LGVLTIMEHT (294 aa). 2 residues coordinate Zn(2+): histidine 179 and glutamate 182. Residues 179-182, arginine 237, and 254-255 each bind substrate; these read HSRE and NR. Cysteines 248 and 271 form a disulfide. A Zn(2+)-binding site is contributed by histidine 306. Residues 307–308 and tyrosine 358 contribute to the substrate site; that span reads SY. Residue glutamate 380 is the Proton donor/acceptor of the active site.

It belongs to the peptidase M14 family. As to quaternary structure, monomer. May form a complex with proelastase 2. Zn(2+) is required as a cofactor. As to expression, pancreas.

The protein resides in the secreted. The catalysed reaction is Release of a C-terminal amino acid, but little or no action with -Asp, -Glu, -Arg, -Lys or -Pro.. It catalyses the reaction leukotriene C4 + H2O = leukotriene F4 + glycine. Inhibited by interaction with the S.magnifica carboxypeptidase inhibitor SmCI. Functionally, carboxypeptidase that catalyzes the release of a C-terminal amino acid, but has little or no action with -Asp, -Glu, -Arg, -Lys or -Pro. Catalyzes the conversion of leukotriene C4 to leukotriene F4 via the hydrolysis of an amide bond. The sequence is that of Carboxypeptidase A1 (CPA1) from Bos taurus (Bovine).